Reading from the N-terminus, the 566-residue chain is Developmental regulatory protein wetA (566 aa).

5 disordered regions span residues 116–174 (VPAV…LMRP), 232–316 (STEG…SDSL), 334–364 (AWWP…SIQS), 381–400 (SSFD…VTSA), and 429–542 (PPVQ…RRRK). 2 stretches are compositionally biased toward polar residues: residues 165–174 (QSFSPSLMRP) and 269–291 (AQQQ…SSPP). Residues 298 to 316 (SSPHSSDPQSLSSWHSDSL) show a composition bias toward low complexity. Composition is skewed to polar residues over residues 347-364 (PSYQ…SIQS) and 381-398 (SSFD…SVVT). A compositionally biased stretch (low complexity) spans 435-448 (SRSPSLSPRGRGSP). Over residues 449-462 (TQGSPLRNEASTKT) the composition is skewed to polar residues. Residues 463 to 473 (SPHRRGYHGRK) are compositionally biased toward basic residues. Over residues 482–500 (PKPVKGPNSSSPGSGSNKS) the composition is skewed to low complexity. Polar residues predominate over residues 501-511 (LTVSFVNFTPN).

Belongs to the wetA family.

In terms of biological role, brlA, abaA and wetA are pivotal regulators of conidiophore development and conidium maturation. They act individually and together to regulate their own expression and that of numerous other sporulation-specific genes. Plays an essential role in the completion of conidial maturation and is essential for trehalose biogenesis in conidia. Negatively regulates expression of the melanin biosynthetic gene cluster. Also plays an a role in the early phase of fungal growth including proper hyphal branching. This chain is Developmental regulatory protein wetA, found in Aspergillus fumigatus (strain ATCC MYA-4609 / CBS 101355 / FGSC A1100 / Af293) (Neosartorya fumigata).